Here is a 314-residue protein sequence, read N- to C-terminus: 2,3,4,5-tetrahydropyridine-2,6-dicarboxylate N-succinyltransferase (314 aa).

Positions 163 and 180 each coordinate Mg(2+). Catalysis depends on Glu-196, which acts as the Acyl-anhydride intermediate. Residues Arg-198, Gly-213, Ser-216, Ala-239, 254–255 (EA), Gly-262, Lys-274, and 287–290 (RRNS) each bind succinyl-CoA.

The protein belongs to the type 2 tetrahydrodipicolinate N-succinyltransferase family. As to quaternary structure, homotrimer.

The protein resides in the cytoplasm. It carries out the reaction (S)-2,3,4,5-tetrahydrodipicolinate + succinyl-CoA + H2O = (S)-2-succinylamino-6-oxoheptanedioate + CoA. Its pathway is amino-acid biosynthesis; L-lysine biosynthesis via DAP pathway; LL-2,6-diaminopimelate from (S)-tetrahydrodipicolinate (succinylase route): step 1/3. Functionally, catalyzes the conversion of the cyclic tetrahydrodipicolinate (THDP) into the acyclic N-succinyl-L-2-amino-6-oxopimelate using succinyl-CoA. This chain is 2,3,4,5-tetrahydropyridine-2,6-dicarboxylate N-succinyltransferase, found in Mycolicibacterium smegmatis (strain ATCC 700084 / mc(2)155) (Mycobacterium smegmatis).